A 485-amino-acid polypeptide reads, in one-letter code: MAESLIQKLENANLNDRESFKGQMKAQPVDMRPKTEDVTKTRGTEFEDYYLKRELLMGIFEAGFERPSPIQEESIPIALSGRDILARAKNGTGKTAAFVIPSLEKVDTKKSKIQTLILVPTRELALQTSQVCKTLGKHMNVKVMVTTGGTTLRDDIIRLNDTVHIVVGTPGRVLDLAGKGVADFSECTTFVMDEADKLLSPEFTPIIEQLLSYFPKNRQISLYSATFPLIVKNFMDKHLNKPYEINLMDELTLRGVTQYYAFVDESQKVHCLNTLFSKLQINQSIIFCNSTNRVELLAKKITELGYSCFYSHAKMLQSHRNRVFHNFRNGVCRNLVCSDLLTRGIDIQAVNVVINFDFPKNAETYLHRIGRSGRFGHRGLAISFISWADRFNLYRIENELGTEIQPIPPSIDPSLYVFPNGDYQIPRPLTASADQVLAAQQAKGQEGYHNRPNNNRGGHPRGGGNRGGYRQSNRQPRYRGQQKAD.

Residues 16-38 (DRESFKGQMKAQPVDMRPKTEDV) form a disordered region. The Q motif motif lies at 44 to 72 (TEFEDYYLKRELLMGIFEAGFERPSPIQE). The region spanning 75-245 (IPIALSGRDI…DKHLNKPYEI (171 aa)) is the Helicase ATP-binding domain. 88–95 (AKNGTGKT) serves as a coordination point for ATP. Residues 193–196 (DEAD) carry the DEAD box motif. The Helicase C-terminal domain maps to 255 to 415 (GVTQYYAFVD…PIPPSIDPSL (161 aa)). Residues 437-485 (LAAQQAKGQEGYHNRPNNNRGGHPRGGGNRGGYRQSNRQPRYRGQQKAD) form a disordered region.

This sequence belongs to the DEAD box helicase family. DDX6/DHH1 subfamily.

It localises to the cytoplasm. It is found in the P-body. The enzyme catalyses ATP + H2O = ADP + phosphate + H(+). Functionally, ATP-dependent RNA helicase involved in mRNA turnover, and more specifically in mRNA decapping. Is involved in G1/S DNA-damage checkpoint recovery, probably through the regulation of the translational status of a subset of mRNAs. May also have a role in translation and mRNA nuclear export. In Schizosaccharomyces pombe (strain 972 / ATCC 24843) (Fission yeast), this protein is Putative ATP-dependent RNA helicase ste13 (ste13).